The primary structure comprises 686 residues: Polyribonucleotide nucleotidyltransferase (686 aa).

2 residues coordinate Mg(2+): aspartate 478 and aspartate 484. The KH domain maps to 545 to 604 (PRVEVIQIPTDKIGLLIGPGGKTINALQDEYGVNISVENDGTVYVAGVEGMSVKAAVSAI). The S1 motif domain maps to 614–684 (GDIYVGKVVK…KQNRISLEMV (71 aa)).

This sequence belongs to the polyribonucleotide nucleotidyltransferase family. It depends on Mg(2+) as a cofactor.

It is found in the cytoplasm. It catalyses the reaction RNA(n+1) + phosphate = RNA(n) + a ribonucleoside 5'-diphosphate. In terms of biological role, involved in mRNA degradation. Catalyzes the phosphorolysis of single-stranded polyribonucleotides processively in the 3'- to 5'-direction. The protein is Polyribonucleotide nucleotidyltransferase of Rubrobacter xylanophilus (strain DSM 9941 / JCM 11954 / NBRC 16129 / PRD-1).